The chain runs to 509 residues: uncharacterized protein (509 aa).

A run of 13 helical transmembrane segments spans residues 14-34, 117-137, 158-178, 188-208, 209-229, 240-260, 303-323, 324-344, 359-379, 399-419, 423-443, 458-478, and 484-504; these read SAFT…WVIP, TIEA…IGVI, EFFI…TCGI, ILVP…GAIF, LAAS…VIAS, IGFR…YLYW, LILT…MVGG, WWFP…MFIS, ASEL…NLVL, MPGS…GLIV, SGLA…VGIP, MLFL…QIPF, and FVMP…VVQV.

To E.coli YfcC. It to B.subtilis YcgA.

It localises to the cell membrane. This is an uncharacterized protein from Haemophilus influenzae (strain ATCC 51907 / DSM 11121 / KW20 / Rd).